The chain runs to 247 residues: Uridylate kinase (247 aa).

15-18 is an ATP binding site; that stretch reads KLSG. Positions 23–28 are involved in allosteric activation by GTP; the sequence is GDEGFG. Gly-57 provides a ligand contact to UMP. Residues Gly-58 and Arg-62 each coordinate ATP. Residues Asp-77 and 138–145 each bind UMP; that span reads TGNPFFTT. Thr-165, Tyr-171, and Asp-174 together coordinate ATP.

This sequence belongs to the UMP kinase family. In terms of assembly, homohexamer.

The protein resides in the cytoplasm. The catalysed reaction is UMP + ATP = UDP + ADP. It participates in pyrimidine metabolism; CTP biosynthesis via de novo pathway; UDP from UMP (UMPK route): step 1/1. Allosterically activated by GTP. Inhibited by UTP. Functionally, catalyzes the reversible phosphorylation of UMP to UDP. This Colwellia psychrerythraea (strain 34H / ATCC BAA-681) (Vibrio psychroerythus) protein is Uridylate kinase.